The following is a 267-amino-acid chain: 4-hydroxy-tetrahydrodipicolinate reductase (267 aa).

NAD(+)-binding positions include 8–13 (GAAGRM) and aspartate 34. Residue arginine 35 coordinates NADP(+). Residues 98-100 (GTT) and 122-125 (AANF) each bind NAD(+). Histidine 155 functions as the Proton donor/acceptor in the catalytic mechanism. Histidine 156 serves as a coordination point for (S)-2,3,4,5-tetrahydrodipicolinate. Lysine 159 serves as the catalytic Proton donor. Residue 165-166 (GT) participates in (S)-2,3,4,5-tetrahydrodipicolinate binding.

This sequence belongs to the DapB family.

It is found in the cytoplasm. The catalysed reaction is (S)-2,3,4,5-tetrahydrodipicolinate + NAD(+) + H2O = (2S,4S)-4-hydroxy-2,3,4,5-tetrahydrodipicolinate + NADH + H(+). It carries out the reaction (S)-2,3,4,5-tetrahydrodipicolinate + NADP(+) + H2O = (2S,4S)-4-hydroxy-2,3,4,5-tetrahydrodipicolinate + NADPH + H(+). The protein operates within amino-acid biosynthesis; L-lysine biosynthesis via DAP pathway; (S)-tetrahydrodipicolinate from L-aspartate: step 4/4. Catalyzes the conversion of 4-hydroxy-tetrahydrodipicolinate (HTPA) to tetrahydrodipicolinate. This Ectopseudomonas mendocina (strain ymp) (Pseudomonas mendocina) protein is 4-hydroxy-tetrahydrodipicolinate reductase.